The sequence spans 135 residues: Glutaredoxin-C3 (135 aa).

In terms of domain architecture, Glutaredoxin spans 26–134 (VARVERLASE…PLLKEAGALW (109 aa)). A disulfide bridge links Cys-46 with Cys-49. The Responsive for interaction with TGA factors signature appears at 132 to 135 (ALWL).

Belongs to the glutaredoxin family. CC-type subfamily.

It localises to the cytoplasm. Its subcellular location is the nucleus. Has a glutathione-disulfide oxidoreductase activity in the presence of NADPH and glutathione reductase. Reduces low molecular weight disulfides and proteins. The polypeptide is Glutaredoxin-C3 (GRXC3) (Oryza sativa subsp. japonica (Rice)).